We begin with the raw amino-acid sequence, 145 residues long: MRLNTLSPAAGSKRVKHRPGRGIGSGLGKTGGRGVKGQTSRSGGGKVRNGFEGGQMPLKIRLPKFGFFSRKSLVSAEVRLNEIALVEGDVVDVSTLKQAGVITKNIVFAKVVLSGNIDRAVTVRGLSVTKGARAAIEAAGGKIEE.

A disordered region spans residues 1–52; the sequence is MRLNTLSPAAGSKRVKHRPGRGIGSGLGKTGGRGVKGQTSRSGGGKVRNGFE. 2 stretches are compositionally biased toward gly residues: residues 21–35 and 42–52; these read RGIGSGLGKTGGRGV and SGGGKVRNGFE.

This sequence belongs to the universal ribosomal protein uL15 family. In terms of assembly, part of the 50S ribosomal subunit.

In terms of biological role, binds to the 23S rRNA. The polypeptide is Large ribosomal subunit protein uL15 (Aeromonas hydrophila subsp. hydrophila (strain ATCC 7966 / DSM 30187 / BCRC 13018 / CCUG 14551 / JCM 1027 / KCTC 2358 / NCIMB 9240 / NCTC 8049)).